We begin with the raw amino-acid sequence, 231 residues long: MFKLLLIEDDESLFHEIKDRLTGWSYDVYGIQDFSQVLQEFAAVNPDCVIIDVQLPKFDGFHWCRLIRSRSNVPILFLSSRDHPADMVMSMQLGADDFIQKPFHFDVLIAKIQAMFRRVHHYNTEPSTIKTWCGAAVDAEQNLVSNDKGSVELTKNEMFILKQLIEQKNKIVSREELIRSLWNDERFVSDNTLTVNVNRLRKKLDALQLGAYIETKVGQGYIAKEEDKFYD.

The region spanning Lys3–Phe116 is the Response regulatory domain. Asp52 is subject to 4-aspartylphosphate. Residues Ser127 to Glu225 constitute a DNA-binding region (ompR/PhoB-type).

In terms of processing, phosphorylated by BceS.

Its subcellular location is the cytoplasm. In terms of biological role, member of the two-component regulatory system BceS/BceR involved in the regulation of bacitracin resistance. When activated by BceS, binds to the upstream region of the bceAB promoter and up-regulates the expression of these two genes. The polypeptide is Sensory transduction protein BceR (bceR) (Bacillus subtilis (strain 168)).